We begin with the raw amino-acid sequence, 243 residues long: CR(VI) reductase (243 aa).

Belongs to the flavin oxidoreductase frp family. It depends on FMN as a cofactor.

The protein is CR(VI) reductase (chrR) of Pseudomonas sp. (strain G-1).